Reading from the N-terminus, the 171-residue chain is Small ribosomal subunit protein uS5 (171 aa).

An S5 DRBM domain is found at 13–76 (FLERLVAVNR…DQAKKNLVTI (64 aa)).

This sequence belongs to the universal ribosomal protein uS5 family. In terms of assembly, part of the 30S ribosomal subunit. Contacts proteins S4 and S8.

Functionally, with S4 and S12 plays an important role in translational accuracy. Located at the back of the 30S subunit body where it stabilizes the conformation of the head with respect to the body. This Dichelobacter nodosus (strain VCS1703A) protein is Small ribosomal subunit protein uS5.